The following is a 395-amino-acid chain: Chorismate synthase (395 aa).

R40 and R46 together coordinate NADP(+). Residues 135–137 (RAS) and 256–257 (QA) each bind FMN. Basic and acidic residues predominate over residues 272–283 (RRGSQAHDEMRP). The disordered stretch occupies residues 272 to 296 (RRGSQAHDEMRPGPDGILRSTNRAG). FMN contacts are provided by residues G300, 315–319 (KPIST), and R341.

It belongs to the chorismate synthase family. Homotetramer. The cofactor is FMNH2.

It carries out the reaction 5-O-(1-carboxyvinyl)-3-phosphoshikimate = chorismate + phosphate. It participates in metabolic intermediate biosynthesis; chorismate biosynthesis; chorismate from D-erythrose 4-phosphate and phosphoenolpyruvate: step 7/7. In terms of biological role, catalyzes the anti-1,4-elimination of the C-3 phosphate and the C-6 proR hydrogen from 5-enolpyruvylshikimate-3-phosphate (EPSP) to yield chorismate, which is the branch point compound that serves as the starting substrate for the three terminal pathways of aromatic amino acid biosynthesis. This reaction introduces a second double bond into the aromatic ring system. The chain is Chorismate synthase from Rhodococcus opacus (strain B4).